Here is a 240-residue protein sequence, read N- to C-terminus: 2-C-methyl-D-erythritol 4-phosphate cytidylyltransferase (240 aa).

It belongs to the IspD/TarI cytidylyltransferase family. IspD subfamily.

It catalyses the reaction 2-C-methyl-D-erythritol 4-phosphate + CTP + H(+) = 4-CDP-2-C-methyl-D-erythritol + diphosphate. It functions in the pathway isoprenoid biosynthesis; isopentenyl diphosphate biosynthesis via DXP pathway; isopentenyl diphosphate from 1-deoxy-D-xylulose 5-phosphate: step 2/6. Functionally, catalyzes the formation of 4-diphosphocytidyl-2-C-methyl-D-erythritol from CTP and 2-C-methyl-D-erythritol 4-phosphate (MEP). The chain is 2-C-methyl-D-erythritol 4-phosphate cytidylyltransferase from Chlorobium luteolum (strain DSM 273 / BCRC 81028 / 2530) (Pelodictyon luteolum).